The sequence spans 729 residues: Isocitrate dehydrogenase [NADP] (729 aa).

Positions 83 and 85 each coordinate NADP(+). Residues Ser-121, Asn-124, Arg-128, Arg-134, and Lys-244 each coordinate D-threo-isocitrate. An NADP(+)-binding site is contributed by Asn-124. Mg(2+) is bound at residue Asp-337. Residues Tyr-407 and Arg-534 each contribute to the D-threo-isocitrate site. Asp-535 and Asp-539 together coordinate Mg(2+). Residues Ser-572, His-576, Arg-587, Asp-589, and Arg-636 each coordinate NADP(+).

Belongs to the monomeric-type IDH family. As to quaternary structure, monomer. The cofactor is Mg(2+). Mn(2+) is required as a cofactor.

It catalyses the reaction D-threo-isocitrate + NADP(+) = 2-oxoglutarate + CO2 + NADPH. Catalyzes the oxidative decarboxylation of isocitrate to 2-oxoglutarate and carbon dioxide with the concomitant reduction of NADP(+). The chain is Isocitrate dehydrogenase [NADP] from Corynebacterium efficiens (strain DSM 44549 / YS-314 / AJ 12310 / JCM 11189 / NBRC 100395).